A 1027-amino-acid chain; its full sequence is Pro-apoptotic serine protease nma111 (1027 aa).

A disordered region spans residues 1–46; sequence MDLNGDAGAKRKRSSIVPAERPAKHLKPESSALTPGDSTPANGTVY. Positions 31–42 are enriched in polar residues; the sequence is SALTPGDSTPAN. The segment at 81-265 is serine protease; the sequence is VVSIHFCQTC…AATDYFLPLD (185 aa). Active-site charge relay system residues include H119, D150, and S232. PDZ domains are found at residues 288–373 and 875–956; these read QWIL…LLVQ and VFCG…VTFD. Residues 991 to 1027 form a disordered region; sequence HNKSKHKDGIAPDAANLNPDAMEQGYDGASDIEPEAE.

Belongs to the peptidase S1C family.

The protein resides in the nucleus. Nuclear serine protease which mediates apoptosis. The polypeptide is Pro-apoptotic serine protease nma111 (nma111) (Aspergillus oryzae (strain ATCC 42149 / RIB 40) (Yellow koji mold)).